Reading from the N-terminus, the 432-residue chain is MEIVYVEIVDVRAREVLDSRGNPTVEAEVVLEDGTVGRAIVPSGASTGKFEALEIRDKDKKRYHGKGVLKAVENVNETIAPALIGMNAFDQPLVDKTLIELDGTENKSKLGANAILAVSMAVARAAANYLGLPMYKYLGGVNAKVLPVPLMNVINGGQHADNNLDLQEFMIVPAGFDSFKEALRAGAEIFHTLKKILHDSGHVTAVGDEGGFAPNLSSNEEAIKILIEAIEEAGYKPSEQVFIALDCAASSFYDEEKGVYFVDGEEKSSEVLMGYYEELIAKYPIISIEDPFAEEDWDAFVEFTKRVGNKVQIVGDDLYVTNVKRLSKGIELKATNSILIKLNQIGTVTETLDAVELAQKNNMTAIISHRSGESEDTFIADLAVATNAGFIKTGSLSRSERIAKYNQLLRIEEELGKVAEFRGLSSFYSIKR.

(2R)-2-phosphoglycerate is bound at residue glutamine 167. Catalysis depends on glutamate 209, which acts as the Proton donor. Mg(2+) is bound by residues aspartate 246, glutamate 289, and aspartate 316. Positions 341, 370, 371, and 392 each coordinate (2R)-2-phosphoglycerate. Lysine 341 serves as the catalytic Proton acceptor.

This sequence belongs to the enolase family. It depends on Mg(2+) as a cofactor.

The protein resides in the cytoplasm. The protein localises to the secreted. It localises to the cell surface. The catalysed reaction is (2R)-2-phosphoglycerate = phosphoenolpyruvate + H2O. It participates in carbohydrate degradation; glycolysis; pyruvate from D-glyceraldehyde 3-phosphate: step 4/5. In terms of biological role, catalyzes the reversible conversion of 2-phosphoglycerate (2-PG) into phosphoenolpyruvate (PEP). It is essential for the degradation of carbohydrates via glycolysis. The sequence is that of Enolase from Thermotoga neapolitana (strain ATCC 49049 / DSM 4359 / NBRC 107923 / NS-E).